Reading from the N-terminus, the 89-residue chain is Small ribosomal subunit protein uS15 (89 aa).

This sequence belongs to the universal ribosomal protein uS15 family. Part of the 30S ribosomal subunit. Forms a bridge to the 50S subunit in the 70S ribosome, contacting the 23S rRNA.

Its function is as follows. One of the primary rRNA binding proteins, it binds directly to 16S rRNA where it helps nucleate assembly of the platform of the 30S subunit by binding and bridging several RNA helices of the 16S rRNA. In terms of biological role, forms an intersubunit bridge (bridge B4) with the 23S rRNA of the 50S subunit in the ribosome. This is Small ribosomal subunit protein uS15 from Thiobacillus denitrificans (strain ATCC 25259 / T1).